Consider the following 376-residue polypeptide: Protein-glutamate methylesterase/protein-glutamine glutaminase (376 aa).

A Response regulatory domain is found at Lys-5 to Glu-122. At Asp-56 the chain carries 4-aspartylphosphate. The CheB-type methylesterase domain occupies Ser-185–Lys-376. Residues Ser-197, His-223, and Asp-319 contribute to the active site.

It belongs to the CheB family. Phosphorylated by CheA. Phosphorylation of the N-terminal regulatory domain activates the methylesterase activity.

The protein localises to the cytoplasm. It catalyses the reaction [protein]-L-glutamate 5-O-methyl ester + H2O = L-glutamyl-[protein] + methanol + H(+). The enzyme catalyses L-glutaminyl-[protein] + H2O = L-glutamyl-[protein] + NH4(+). Functionally, involved in chemotaxis. Part of a chemotaxis signal transduction system that modulates chemotaxis in response to various stimuli. Catalyzes the demethylation of specific methylglutamate residues introduced into the chemoreceptors (methyl-accepting chemotaxis proteins or MCP) by CheR. Also mediates the irreversible deamidation of specific glutamine residues to glutamic acid. This Hydrogenovibrio crunogenus (strain DSM 25203 / XCL-2) (Thiomicrospira crunogena) protein is Protein-glutamate methylesterase/protein-glutamine glutaminase.